We begin with the raw amino-acid sequence, 162 residues long: Caveolin-2 (162 aa).

Topologically, residues 1-86 are cytoplasmic; sequence MGLETEKADV…FEISKYVIYK (86 aa). A Phosphotyrosine; by SRC modification is found at Tyr-19. 2 positions are modified to phosphoserine: Ser-20 and Ser-23. Tyr-27 is modified (phosphotyrosine; by SRC). The residue at position 36 (Ser-36) is a Phosphoserine. The segment at residues 87–107 is an intramembrane region (helical); the sequence is FLTVFLAIPLAFAAGIIFATL. The Cytoplasmic portion of the chain corresponds to 108-162; it reads SCLHIWIIMPFVKTCLMVLPSVQTIWRSVTDAVIAPLCTSVGRVFSSVSLQLSRD.

Belongs to the caveolin family. As to quaternary structure, monomer or homodimer. Interacts with CAV1; the interaction forms a stable heterooligomeric complex that is required for targeting to lipid rafts and for caveolae formation. Tyrosine phosphorylated forms do not form heterooligomers with the Tyr-19-phosphorylated form existing as a monomer or dimer, and the Tyr-27-form as a monomer only. Interacts (tyrosine phosphorylated form) with the SH2 domain-containing proteins, RASA1, NCK1 and SRC. Interacts (tyrosine phosphorylated form) with INSR, the interaction (Tyr-27-phosphorylated form) is increased on insulin stimulation. Interacts (Tyr-19 phosphorylated form) with MAPK1 (phosphorylated form); the interaction, promoted by insulin, leads to nuclear location and MAPK1 activation. Interacts with STAT3; the interaction is increased on insulin-induced tyrosine phosphorylation leading to STAT activation. Phosphorylated on serine and tyrosine residues. CAV1 promotes phosphorylation on Ser-23 which then targets the complex to the plasma membrane, lipid rafts and caveolae. Phosphorylation on Ser-36 appears to modulate mitosis in endothelial cells. Phosphorylation on both Tyr-19 and Tyr-27 is required for insulin-induced 'Ser-727' phosphorylation of STAT3 and its activation. Phosphorylation on Tyr-19 is required for insulin-induced phosphorylation of MAPK1 and DNA binding of STAT3. Tyrosine phosphorylation is induced by both EGF and insulin (By. similarity).

The protein localises to the nucleus. It localises to the cytoplasm. The protein resides in the golgi apparatus membrane. It is found in the cell membrane. Its subcellular location is the membrane. The protein localises to the caveola. In terms of biological role, may act as a scaffolding protein within caveolar membranes. Interacts directly with G-protein alpha subunits and can functionally regulate their activity. Acts as an accessory protein in conjunction with CAV1 in targeting to lipid rafts and driving caveolae formation. The Ser-36 phosphorylated form has a role in modulating mitosis in endothelial cells. Positive regulator of cellular mitogenesis of the MAPK signaling pathway. Required for the insulin-stimulated nuclear translocation and activation of MAPK1 and STAT3, and the subsequent regulation of cell cycle progression. This chain is Caveolin-2 (CAV2), found in Carollia perspicillata (Seba's short-tailed bat).